The primary structure comprises 237 residues: CD99 antigen-like protein 2 (237 aa).

An N-terminal signal peptide occupies residues 1-25 (MVARLTAFLVCLVFSLATLVQRGYG). The Extracellular portion of the chain corresponds to 26–161 (DTDGFNLEDA…PGSGISTETG (136 aa)). Residues 47–157 (DHFSTTTRRP…SNDDPGSGIS (111 aa)) are disordered. Composition is skewed to low complexity over residues 51–66 (TTTRRPVTTRAPANPA) and 74–84 (TTTTRRPGTTR). The span at 102–111 (DDRNDLDGPK) shows a compositional bias: basic and acidic residues. Ser-154 carries O-linked (Xyl...) (chondroitin sulfate) serine glycosylation. Residues 162–182 (TIAGVASALAMALIGAVSSYI) form a helical membrane-spanning segment. Over 183–237 (SYQQKKFCFSIQQGLNADYVKGENLEAVVCEEPQVTYSKQETQSAEPPPPEPPRI) the chain is Cytoplasmic. Over residues 218–227 (TYSKQETQSA) the composition is skewed to polar residues. The disordered stretch occupies residues 218–237 (TYSKQETQSAEPPPPEPPRI). Residues 228-237 (EPPPPEPPRI) are compositionally biased toward pro residues.

It belongs to the CD99 family. O-glycosylated. As to expression, highly expressed in the nervous system, including brain, dentate nucleus of hippocampus, granular and Purkinje cells of cerebellum, brain stem nucleus and choroid plexus. Expressed in peripheral blood T- and B-cells and neutrophils (at protein level). Almost undetectable in bone marrow-derived neutrophils (at protein level). Also expressed in thymocytes (at protein level) with higher expression in cortical thymocytes than in medullary thymocytes. Expressed at high levels in testis (mostly in germ cells and Sertoli cells) and ovary (mostly in granulosa cells). Expressed in lung, heart, kidney and liver (at protein level); however, expression in heart, kidney and liver seems restricted to endothelial cells (at protein level). Highly expressed in endothelial cells and to a lower level in vascular smooth muscle cells (at protein level). Low expression in spleen.

It is found in the cell membrane. The protein resides in the cell junction. It localises to the secreted. Plays a role in a late step of leukocyte extravasation helping cells to overcome the endothelial basement membrane. Acts at the same site as, but independently of, PECAM1. Homophilic adhesion molecule, but these interactions may not be required for cell aggregation. This Mus musculus (Mouse) protein is CD99 antigen-like protein 2 (Cd99l2).